Here is a 259-residue protein sequence, read N- to C-terminus: Energy-coupling factor transporter ATP-binding protein EcfA1 (259 aa).

The 228-residue stretch at 3 to 230 (ITLNSVSFRY…EFDDVEIPFK (228 aa)) folds into the ABC transporter domain. 38–43 (GSGKTT) serves as a coordination point for ATP. Residue Glu157 is the Proton acceptor of the active site.

This sequence belongs to the ABC transporter superfamily. Energy-coupling factor EcfA family. As to quaternary structure, forms a heterodimer with EcfA2. Forms a stable energy-coupling factor (ECF) transporter complex composed of 2 membrane-embedded substrate-binding proteins (S component, RibU, BioY), 2 ATP-binding proteins (A component) and 2 transmembrane proteins (T component) upon coexpression in E.coli. Stable subcomplexes with both A plus T components can also be isolated. This complex interacts with at least 2 substrate-specific components, BioY and RibU.

Its subcellular location is the cell inner membrane. In terms of biological role, ATP-binding (A) component of a common energy-coupling factor (ECF) ABC-transporter complex. Unlike classic ABC transporters this ECF transporter provides the energy necessary to transport a number of different substrates. Expression of the complex plus RibU in E.coli allows riboflavin uptake; uptake does not occur in the absence of RibU or the EcfA1A2T complex. This Thermotoga maritima (strain ATCC 43589 / DSM 3109 / JCM 10099 / NBRC 100826 / MSB8) protein is Energy-coupling factor transporter ATP-binding protein EcfA1.